The primary structure comprises 403 residues: Deubiquitinase and deneddylase Dub1 (403 aa).

A compositionally biased stretch (polar residues) spans 1–11; that stretch reads MLSPTNSTSKT. The tract at residues 1–24 is disordered; it reads MLSPTNSTSKTAPVPPRDSSKPVL. A helical transmembrane segment spans residues 40–60; the sequence is TALAVLLVVVTLGLILLFYSF. The tract at residues 77-132 is disordered; the sequence is KEQPTISIPVPLPSPPLAVPRPSTPPAPTPAISRPSTPSAPKPSTPPPLLPKAPKP. Composition is skewed to pro residues over residues 86-105 and 114-130; these read VPLP…PAPT and PSAP…PKAP. Active-site residues include H277, D294, and C347.

It belongs to the peptidase C48 family.

The protein localises to the secreted. Its subcellular location is the host cell. It is found in the membrane. In terms of biological role, effector proteins function to alter host cell physiology and promote bacterial survival in host tissues. This protease possesses deubiquitinating and deneddylating activities. This Chlamydia trachomatis serovar L2b (strain UCH-1/proctitis) protein is Deubiquitinase and deneddylase Dub1 (cdu1).